The sequence spans 868 residues: Receptor-like protein 32 (868 aa).

Residues 1-32 form the signal peptide; the sequence is MKDSWNSTSIIPFTFSSLIFFLFTFDFQDVFG. The Extracellular segment spans residues 33 to 815; sequence VPTKHLCRLE…PPELEEEDRE (783 aa). 4 N-linked (GlcNAc...) asparagine glycosylation sites follow: Asn73, Asn109, Asn141, and Asn165. LRR repeat units lie at residues 118–142, 143–166, 168–188, 189–213, 214–237, 239–261, 262–285, 287–310, 312–334, 335–360, 362–385, 389–412, 413–436, 438–459, 465–489, 490–515, 517–538, 540–560, 561–586, 588–606, 607–630, 675–699, 700–723, 724–747, and 749–772; these read LRFL…IENF, SHLT…IGNL, QLTF…FFGN, MNQL…LLNL, KHLS…MSSL, NLEY…LFTI, ASLT…NISS, STLT…ISKF, NLQD…IFTN, LKSL…LFSS, LNSI…SVAD, TQLI…LRSQ, HKMT…LWTL, KLIF…TEHG, KPSM…ICAL, RSLI…NLKS, LSFL…IFKS, RSLD…FIRL, SALE…SLKK, QVLV…HASF, HTLR…YFVN, LKIY…IGLL, KELH…MGNL, RELE…LGNL, and YLAY…QFRR. Asn233 is a glycosylation site (N-linked (GlcNAc...) asparagine). Residues Asn275 and Asn282 are each glycosylated (N-linked (GlcNAc...) asparagine). 2 N-linked (GlcNAc...) asparagine glycosylation sites follow: Asn342 and Asn347. 2 N-linked (GlcNAc...) asparagine glycosylation sites follow: Asn477 and Asn503. N-linked (GlcNAc...) asparagine glycosylation is present at Asn574. Asn613 is a glycosylation site (N-linked (GlcNAc...) asparagine). Residues Asn706, Asn746, Asn754, and Asn774 are each glycosylated (N-linked (GlcNAc...) asparagine). The helical transmembrane segment at 816–836 threads the bilayer; it reads VFSWIAAAIGFGPGIAFGLTI. Residues 837–868 lie on the Cytoplasmic side of the membrane; sequence RYILVFYKPDWFMHTFGHLQPSAHEKRLRRKQ.

This sequence belongs to the RLP family.

The protein resides in the cell membrane. The chain is Receptor-like protein 32 from Arabidopsis thaliana (Mouse-ear cress).